Reading from the N-terminus, the 148-residue chain is Photosystem I reaction center subunit XI (148 aa).

3 helical membrane-spanning segments follow: residues 48-68 (LEIG…LGPL), 73-93 (IGLL…TLGL), and 122-142 (GGFF…LSSI).

Belongs to the PsaL family.

The protein resides in the plastid. The protein localises to the chloroplast thylakoid membrane. The polypeptide is Photosystem I reaction center subunit XI (Thalassiosira pseudonana (Marine diatom)).